A 740-amino-acid chain; its full sequence is Polyribonucleotide nucleotidyltransferase (740 aa).

Mg(2+) is bound by residues aspartate 492 and aspartate 498. Positions 559–618 (PMVQTLEIQKEKIRDVIGLGGKVIKELCKTFDVEIDISENGEVKVWGNVGENVKKAVQSI) constitute a KH domain. Residues 628–696 (GDIFDGEVVK…HKNRVKLTLR (69 aa)) form the S1 motif domain.

The protein belongs to the polyribonucleotide nucleotidyltransferase family. Mg(2+) serves as cofactor.

It is found in the cytoplasm. It carries out the reaction RNA(n+1) + phosphate = RNA(n) + a ribonucleoside 5'-diphosphate. In terms of biological role, involved in mRNA degradation. Catalyzes the phosphorolysis of single-stranded polyribonucleotides processively in the 3'- to 5'-direction. The protein is Polyribonucleotide nucleotidyltransferase of Orientia tsutsugamushi (strain Boryong) (Rickettsia tsutsugamushi).